Consider the following 122-residue polypeptide: Large ribosomal subunit protein bL12 (122 aa).

Belongs to the bacterial ribosomal protein bL12 family. Homodimer. Part of the ribosomal stalk of the 50S ribosomal subunit. Forms a multimeric L10(L12)X complex, where L10 forms an elongated spine to which 2 to 4 L12 dimers bind in a sequential fashion. Binds GTP-bound translation factors.

In terms of biological role, forms part of the ribosomal stalk which helps the ribosome interact with GTP-bound translation factors. Is thus essential for accurate translation. The sequence is that of Large ribosomal subunit protein bL12 from Neisseria lactamica.